Consider the following 335-residue polypeptide: L-lactate dehydrogenase B chain (335 aa).

Residues 29–57 and Arg99 each bind NAD(+); that span reads GQVG…VEDK. Residues Arg106, Asn138, and Arg169 each contribute to the substrate site. Asn138 contributes to the NAD(+) binding site. His193 serves as the catalytic Proton acceptor. Thr248 is a substrate binding site.

Belongs to the LDH/MDH superfamily. LDH family. In terms of assembly, homotetramer.

The protein resides in the cytoplasm. It catalyses the reaction (S)-lactate + NAD(+) = pyruvate + NADH + H(+). It participates in fermentation; pyruvate fermentation to lactate; (S)-lactate from pyruvate: step 1/1. Interconverts simultaneously and stereospecifically pyruvate and lactate with concomitant interconversion of NADH and NAD(+). This is L-lactate dehydrogenase B chain (LDHB) from Sceloporus undulatus (Eastern fence lizard).